A 512-amino-acid chain; its full sequence is Zinc metalloprotease mde10 (512 aa).

A signal peptide spans 1–15 (MRLVLLFSCVLAVSS). Asparagine 35 carries an N-linked (GlcNAc...) asparagine glycan. The Peptidase M12B domain maps to 65–306 (QTLWIGVVAD…KYVSLSCLSK (242 aa)). Residue histidine 229 participates in Zn(2+) binding. Glutamate 230 is an active-site residue. 2 residues coordinate Zn(2+): histidine 233 and histidine 239. Cystine bridges form between cysteine 246-cysteine 254 and cysteine 374-cysteine 394. In terms of domain architecture, Disintegrin spans 315-402 (LGTCGNGIVE…KCPVDENWDD (88 aa)). N-linked (GlcNAc...) asparagine glycosylation is present at asparagine 432.

The cofactor is Zn(2+). In terms of processing, glycosylated.

The protein localises to the endoplasmic reticulum. It localises to the spore wall. Functionally, has a role in the development of the spore envelope. The polypeptide is Zinc metalloprotease mde10 (mde10) (Schizosaccharomyces pombe (strain 972 / ATCC 24843) (Fission yeast)).